A 119-amino-acid polypeptide reads, in one-letter code: Circadian clock oscillator protein KaiB (119 aa).

This sequence belongs to the KaiB family. In terms of assembly, the KaiABC complex composition changes during the circadian cycle to control KaiC phosphorylation. Complexes KaiC(6), KaiA(2-4):KaiC(6), KaiB(6):KaiC(6) and KaiC(6):KaiB(6):KaiA(12) are among the most important forms, many form cooperatively. Undergoes a major conformational rearrangment; in the free state forms homotetramers as a dimer of dimers. When bound to the CI domain of KaiC switches to a monomeric thioredoxin-fold (KaiB(fs)). KaiB(fs) binds CikA, leading it to dephosphorylate phospho-RpaA.

Its function is as follows. Key component of the KaiABC oscillator complex, which constitutes the main circadian regulator in cyanobacteria. Complex composition changes during the circadian cycle to control KaiC phosphorylation. KaiA stimulates KaiC autophosphorylation, while KaiB sequesters KaiA, leading to KaiC autodephosphorylation. Phospho-Ser-431 KaiC accumulation triggers binding of KaiB to form the KaiB(6):KaiC(6) complex, leading to changes in output regulators CikA and SasA. KaiB switches to a thioredoxin-like fold (KaiB(fs)) when bound to KaiC. KaiB(6):KaiC(6) formation exposes a site for KaiA binding that sequesters KaiA from KaiC, making the KaiC(6):KaiB(6):KaiA(12) complex that results in KaiC autodephosphorylation. A metamorphic protein which reversibly switches between an inactive tetrameric fold and a rare, thioredoxin-like monomeric fold (KaiB(fs)). KaiB(fs) binds phospho-KaiC, KaiA and CikA. KaiA and CikA compete for binding to KaiB(fs), and KaiB(fs) and SasA compete for binding to KaiC, thus the clock oscillator and output signal pathway are tightly coupled. This is Circadian clock oscillator protein KaiB from Synechococcus sp. (strain CC9311).